Reading from the N-terminus, the 660-residue chain is Threonine--tRNA ligase (660 aa).

In terms of domain architecture, TGS spans 1 to 49 (MPDSIVHVKKGQRFLDVIKDKNVVAVKIDSVLHDLRDVAERDVDAIPVS). The interval 225–554 (DHRRIIAEMD…LLEHYAGKLP (330 aa)) is catalytic. 3 residues coordinate Zn(2+): cysteine 318, histidine 369, and histidine 531.

It belongs to the class-II aminoacyl-tRNA synthetase family. In terms of assembly, homodimer. The cofactor is Zn(2+).

It localises to the cytoplasm. The catalysed reaction is tRNA(Thr) + L-threonine + ATP = L-threonyl-tRNA(Thr) + AMP + diphosphate + H(+). Catalyzes the attachment of threonine to tRNA(Thr) in a two-step reaction: L-threonine is first activated by ATP to form Thr-AMP and then transferred to the acceptor end of tRNA(Thr). The polypeptide is Threonine--tRNA ligase (Thermoplasma acidophilum (strain ATCC 25905 / DSM 1728 / JCM 9062 / NBRC 15155 / AMRC-C165)).